The primary structure comprises 403 residues: Putative glutamate--cysteine ligase 2 (403 aa).

The disordered stretch occupies residues 370–403 (ESAAQRRAPQAARRRIRASSEPLGPMSMWPERLH).

The protein belongs to the glutamate--cysteine ligase type 2 family. YbdK subfamily.

The catalysed reaction is L-cysteine + L-glutamate + ATP = gamma-L-glutamyl-L-cysteine + ADP + phosphate + H(+). Functionally, ATP-dependent carboxylate-amine ligase which exhibits weak glutamate--cysteine ligase activity. In Bordetella avium (strain 197N), this protein is Putative glutamate--cysteine ligase 2.